A 29-amino-acid chain; its full sequence is Trypsin inhibitor 4 (29 aa).

3 disulfide bridges follow: cysteine 3-cysteine 20, cysteine 10-cysteine 22, and cysteine 16-cysteine 28.

The protein belongs to the protease inhibitor I7 (squash-type serine protease inhibitor) family.

Its subcellular location is the secreted. Its function is as follows. Strongly inhibits trypsin, weakly inhibits chymotrypsin. This Cyclanthera pedata (Achocha) protein is Trypsin inhibitor 4.